The sequence spans 110 residues: Insulin (110 aa).

A signal peptide spans 1-24; that stretch reads MALWMRLLPLLALLALWGPDPAQA. 3 cysteine pairs are disulfide-bonded: Cys31–Cys96, Cys43–Cys109, and Cys95–Cys100. The propeptide at 57–87 is c peptide; it reads EAEDLQVGQVELGGGPGAGSLQPLALEGSLQ.

The protein belongs to the insulin family. As to quaternary structure, heterodimer of a B chain and an A chain linked by two disulfide bonds.

It localises to the secreted. In terms of biological role, insulin decreases blood glucose concentration. It increases cell permeability to monosaccharides, amino acids and fatty acids. It accelerates glycolysis, the pentose phosphate cycle, and glycogen synthesis in liver. This chain is Insulin (INS), found in Pongo pygmaeus (Bornean orangutan).